Consider the following 227-residue polypeptide: PKHD-type hydroxylase ACICU_00484 (227 aa).

Residues D78–S178 form the Fe2OG dioxygenase domain. Fe cation-binding residues include H96, D98, and H159. R169 is a 2-oxoglutarate binding site.

The cofactor is Fe(2+). It depends on L-ascorbate as a cofactor.

This is PKHD-type hydroxylase ACICU_00484 from Acinetobacter baumannii (strain ACICU).